The sequence spans 256 residues: MILCIDVGNSHIYGGVFDGDEIKLRFRHTSKVSTSDELGIFLKSVLRENNCSPETIRKIAICSVVPQVDYSLRSACVKYFSIDPFLLQAGVKTGLNIKYRNPVEVGADRIANAIAATHSFPNQNIIVIDFGTATTFCAISHKKAYLGGAILPGLRLSADALSKNTAKLPSVEIIKTESVVGRSTIESIQSGVYYGVLGACKELIQRIHHEAFNGDKILILATGGFASLFDKQGLYDHLVPDLVLQGIRLAAMMNTA.

6-13 (DVGNSHIY) contributes to the ATP binding site. Residues tyrosine 99 and 106-109 (GADR) contribute to the substrate site. Aspartate 108 functions as the Proton acceptor in the catalytic mechanism. Aspartate 129 is a binding site for K(+). Threonine 132 is a binding site for ATP. Threonine 184 is a substrate binding site.

The protein belongs to the type III pantothenate kinase family. In terms of assembly, homodimer. NH4(+) is required as a cofactor. Requires K(+) as cofactor.

It localises to the cytoplasm. It carries out the reaction (R)-pantothenate + ATP = (R)-4'-phosphopantothenate + ADP + H(+). It functions in the pathway cofactor biosynthesis; coenzyme A biosynthesis; CoA from (R)-pantothenate: step 1/5. Catalyzes the phosphorylation of pantothenate (Pan), the first step in CoA biosynthesis. This chain is Type III pantothenate kinase, found in Legionella pneumophila (strain Corby).